A 95-amino-acid polypeptide reads, in one-letter code: RING finger protein Z (95 aa).

The N-myristoyl glycine; by host moiety is linked to residue G2. An RING-type; atypical zinc finger spans residues 38-74; the sequence is CKSCWFANRGLIACSDHYLCLNCLTRLRSQSQFCGIC. Residues 88–91 carry the PTAP/PSAP motif motif; that stretch reads PSAP.

It belongs to the arenaviridae Z protein family. In terms of assembly, interacts with protein NP; this interaction probably directs the encapsidated genome to budding sites. Interacts (via RING domain) with polymerase L; this interaction inhibits viral transcription and replication, Z partially blocks the product exit tunnel for the releasing nascent RNA product. Interacts with the glycoprotein complex; this interaction plays a role in virion budding. Interacts with host eIF4E; this interaction results in eIF4E reduced affinity for its substrate, the 5'-m7 G cap structure. Interacts (via late-budding domain) with host TSG101; this interaction is essential for budding and release of viral particles. Interacts with host RPLP0; this interaction may serve to load ribosome-like particles inside the virion. Interacts with host PML; this interaction induces PML bodies redistribution in the cytoplasm upon viral infection. Post-translationally, myristoylation is required for the role of RING finger protein Z in assembly and budding.

The protein resides in the virion. The protein localises to the host cytoplasm. Its subcellular location is the host perinuclear region. It is found in the host cell membrane. Its function is as follows. Plays a crucial role in virion assembly and budding. Expressed late in the virus life cycle, it acts as an inhibitor of viral transcription and RNA synthesis by interacting with the viral polymerase L. Presumably recruits the NP encapsidated genome to cellular membranes at budding sites via direct interaction with NP. Plays critical roles in the final steps of viral release by interacting with host TSG101, a member of the vacuolar protein-sorting pathway and using other cellular host proteins involved in vesicle formation pathway. The budding of the virus progeny occurs after association of protein Z with the viral glycoprotein complex SSP-GP1-GP2 at the cell periphery, step that requires myristoylation of protein Z. Also selectively represses protein production by associating with host eIF4E. In cell-based minigenome assay, has an inhibitory effect on the ribonucleoprotein machinery (vRNP), which is responsible for the replication and transcription of the viral genome. The polypeptide is RING finger protein Z (Pirital mammarenavirus (isolate Rat/Venezuela/VAV-488/1995) (PIRV)).